Here is a 368-residue protein sequence, read N- to C-terminus: tRNA-specific 2-thiouridylase MnmA (368 aa).

ATP contacts are provided by residues 24–31 and Leu50; that span reads AMSGGVDS. The Nucleophile role is filled by Cys117. Cys117 and Cys213 are disulfide-bonded. Gly141 contacts ATP. Residues 163 to 165 are interaction with tRNA; the sequence is KDQ. The active-site Cysteine persulfide intermediate is Cys213.

Belongs to the MnmA/TRMU family.

It is found in the cytoplasm. It catalyses the reaction S-sulfanyl-L-cysteinyl-[protein] + uridine(34) in tRNA + AH2 + ATP = 2-thiouridine(34) in tRNA + L-cysteinyl-[protein] + A + AMP + diphosphate + H(+). Catalyzes the 2-thiolation of uridine at the wobble position (U34) of tRNA, leading to the formation of s(2)U34. This chain is tRNA-specific 2-thiouridylase MnmA, found in Wolbachia pipientis subsp. Culex pipiens (strain wPip).